The primary structure comprises 279 residues: MIHFTKMHGLGNDFMVVDGVTQNVYFSPEQIKRLADRNFGIGFDQLLLVEPPYDPDLDFHYRIFNADGSEVEQCGNGARCFARFVKSKGLINKQKIKVSTSSGKMTLRLERDGSVTVNMGIPVLEPSRIPFNAKKAEKTYLLQADMPEGMQTFLCGAVSMGNPHCVLEVDDVANADVERIGSLLTKHERFPKGVNVGFMQVVDANHIKLRVYERGAAETLACGSGACAAVAVGQLQGKLARRVRVDLPGGSLTINWEGEGKPLWMTGPAEHVYDGQIQQ.

Substrate contacts are provided by asparagine 12, glutamine 45, and asparagine 65. The active-site Proton donor is cysteine 74. Substrate contacts are provided by residues 75-76 (GN), asparagine 162, asparagine 195, and 213-214 (ER). Cysteine 222 acts as the Proton acceptor in catalysis. 223 to 224 (GS) contributes to the substrate binding site.

Belongs to the diaminopimelate epimerase family. In terms of assembly, homodimer.

Its subcellular location is the cytoplasm. It carries out the reaction (2S,6S)-2,6-diaminopimelate = meso-2,6-diaminopimelate. The protein operates within amino-acid biosynthesis; L-lysine biosynthesis via DAP pathway; DL-2,6-diaminopimelate from LL-2,6-diaminopimelate: step 1/1. In terms of biological role, catalyzes the stereoinversion of LL-2,6-diaminopimelate (L,L-DAP) to meso-diaminopimelate (meso-DAP), a precursor of L-lysine and an essential component of the bacterial peptidoglycan. This chain is Diaminopimelate epimerase, found in Shewanella loihica (strain ATCC BAA-1088 / PV-4).